Reading from the N-terminus, the 256-residue chain is Probable succinate transporter subunit YjjP (256 aa).

Topologically, residues 1 to 113 are cytoplasmic; that stretch reads MQTEQQRAVT…KRFSQIQPLR (113 aa). A helical membrane pass occupies residues 114–135; that stretch reads YPRWLVALMVGLSCACFCKLNN. The Periplasmic portion of the chain corresponds to 136–140; that stretch reads GGWDG. The helical transmembrane segment at 141–158 threads the bilayer; sequence AVITFFASTTAMYIRQLL. Topologically, residues 159–168 are cytoplasmic; sequence AQRHLHPQIN. Residues 169–189 form a helical membrane-spanning segment; it reads FCLTAFAATTISGLLLQLPTF. Residues 190-194 lie on the Periplasmic side of the membrane; it reads SNTPT. The helical transmembrane segment at 195–215 threads the bilayer; that stretch reads IAMAASVLLLVPGFPLINAVA. Residues 216-228 lie on the Cytoplasmic side of the membrane; that stretch reads DMFKGHINTGLAR. Residues 229 to 249 form a helical membrane-spanning segment; it reads WAIASLLTLATCVGVVMALTI. Over 250 to 256 the chain is Periplasmic; sequence WGLRGWV.

It belongs to the ThrE exporter (TC 2.A.79) family. As to quaternary structure, the transporter is composed of YjjB and YjjP.

The protein resides in the cell inner membrane. Its function is as follows. Involved in succinate export with YjjB. Both proteins are required for export. Contributes to succinate production under both aerobic and anaerobic conditions. This is Probable succinate transporter subunit YjjP (yjjP) from Escherichia coli (strain K12).